A 340-amino-acid polypeptide reads, in one-letter code: Glycerol-3-phosphate dehydrogenase [NAD(P)+] (340 aa).

3 residues coordinate NADPH: Ser14, Trp15, and Lys109. Sn-glycerol 3-phosphate-binding residues include Lys109, Gly140, and Ser142. Residue Ala144 coordinates NADPH. Residues Lys195, Asp248, Ser258, Arg259, and Asn260 each coordinate sn-glycerol 3-phosphate. Lys195 (proton acceptor) is an active-site residue. Arg259 contributes to the NADPH binding site. Positions 283 and 285 each coordinate NADPH.

The protein belongs to the NAD-dependent glycerol-3-phosphate dehydrogenase family.

The protein resides in the cytoplasm. It catalyses the reaction sn-glycerol 3-phosphate + NAD(+) = dihydroxyacetone phosphate + NADH + H(+). The enzyme catalyses sn-glycerol 3-phosphate + NADP(+) = dihydroxyacetone phosphate + NADPH + H(+). It functions in the pathway membrane lipid metabolism; glycerophospholipid metabolism. Catalyzes the reduction of the glycolytic intermediate dihydroxyacetone phosphate (DHAP) to sn-glycerol 3-phosphate (G3P), the key precursor for phospholipid synthesis. The sequence is that of Glycerol-3-phosphate dehydrogenase [NAD(P)+] from Syntrophobacter fumaroxidans (strain DSM 10017 / MPOB).